The primary structure comprises 298 residues: Cobalt-precorrin-5B C(1)-methyltransferase (298 aa).

It belongs to the CbiD family.

It catalyses the reaction Co-precorrin-5B + S-adenosyl-L-methionine = Co-precorrin-6A + S-adenosyl-L-homocysteine. Its pathway is cofactor biosynthesis; adenosylcobalamin biosynthesis; cob(II)yrinate a,c-diamide from sirohydrochlorin (anaerobic route): step 6/10. In terms of biological role, catalyzes the methylation of C-1 in cobalt-precorrin-5B to form cobalt-precorrin-6A. This is Cobalt-precorrin-5B C(1)-methyltransferase from Archaeoglobus fulgidus (strain ATCC 49558 / DSM 4304 / JCM 9628 / NBRC 100126 / VC-16).